A 227-amino-acid chain; its full sequence is tRNA (guanine-N(1)-)-methyltransferase (227 aa).

Residues Gly112 and 132-137 (LGDFVL) each bind S-adenosyl-L-methionine.

Belongs to the RNA methyltransferase TrmD family. Homodimer.

Its subcellular location is the cytoplasm. The enzyme catalyses guanosine(37) in tRNA + S-adenosyl-L-methionine = N(1)-methylguanosine(37) in tRNA + S-adenosyl-L-homocysteine + H(+). Functionally, specifically methylates guanosine-37 in various tRNAs. This chain is tRNA (guanine-N(1)-)-methyltransferase, found in Gloeobacter violaceus (strain ATCC 29082 / PCC 7421).